The primary structure comprises 748 residues: Histone-lysine N-methyltransferase EZH2 (748 aa).

Positions 183-199 are enriched in acidic residues; sequence DYEDDEDGEDNQDDERD. 2 disordered regions span residues 183-215 and 347-428; these read DYED…KETL and TPPK…NIEP. Residues 200 to 215 show a composition bias toward basic and acidic residues; it reads DITKDQDDNMEEKETL. The segment covering 348–359 has biased composition (basic residues); that stretch reads PPKRPSGRRRGR. Residues 376–387 show a composition bias toward basic and acidic residues; the sequence is EAKDTDSDREAG. Residues 505 to 607 form the CXC domain; the sequence is CRKIQLKKDG…SKNVSCKNCS (103 aa). One can recognise an SET domain in the interval 614–729; sequence KHLLLAPSDV…TGEELFFDYR (116 aa).

The protein belongs to the class V-like SAM-binding methyltransferase superfamily. Histone-lysine methyltransferase family. EZ subfamily. As to quaternary structure, component of the prc2/eed-ezh2 complex.

It is found in the nucleus. It carries out the reaction L-lysyl(27)-[histone H3] + 3 S-adenosyl-L-methionine = N(6),N(6),N(6)-trimethyl-L-lysyl(27)-[histone H3] + 3 S-adenosyl-L-homocysteine + 3 H(+). Polycomb group (PcG) protein. Catalytic subunit of the prc2/eed-ezh2 complex, which methylates 'Lys-9' and 'Lys-27' of histone H3, leading to transcriptional repression of the affected target gene. May regulate the circadian clock via histone methylation at the promoter of the circadian genes. The protein is Histone-lysine N-methyltransferase EZH2 (ezh2-b) of Xenopus laevis (African clawed frog).